Reading from the N-terminus, the 315-residue chain is THO complex subunit 3 (315 aa).

6 WD repeats span residues 18–57 (GHKK…HSKA), 64–104 (GHTD…CTQQ), 106–145 (ELSG…PLHR), 189–228 (AHTA…CLRT), 231–270 (KLEW…TVHQ), and 272–311 (PCRA…RIFG).

Belongs to the THOC3 family. In terms of assembly, component of the THO complex, which is composed of THO1, THO2, THO3, THO5, THO6 and THO7.

It is found in the nucleus. Functionally, acts as a component of the THO subcomplex of the TREX complex which is thought to couple mRNA transcription, processing and nuclear export. Contributes to the integrity of the endogenous trans-acting small interfering RNA (ta-siRNA) pathway. May process or transport a long RNA molecule so that it can be a template for secondary siRNA production. May participate in the trafficking of siRNA precursors to the ARGONAUTE catalytic center. Required for the generation of functional messenger ribonucleoproteins (mRNPs). The sequence is that of THO complex subunit 3 (THO3) from Arabidopsis thaliana (Mouse-ear cress).